Consider the following 441-residue polypeptide: FAM10 family protein At4g22670 (441 aa).

A disordered region spans residues 41–114 (KIPTGVHEED…PQKMGDSSVE (74 aa)). Over residues 46 to 55 (VHEEDKDTKP) the composition is skewed to basic and acidic residues. Acidic residues-rich tracts occupy residues 61-71 (EESDDDMDETE) and 78-102 (EEEE…EPDN). Residues serine 63 and serine 89 each carry the phosphoserine modification. 3 TPR repeats span residues 121-156 (EAAQ…NPTS), 158-190 (IMYG…NPDS), and 191-224 (AKGY…DYDE). A coiled-coil region spans residues 236-285 (NAHKLEEHRRKYDRLRKEREDKKAERDRLRRRAEAQAAYDKAKKEEQSSS). Residues 244–282 (RRKYDRLRKEREDKKAERDRLRRRAEAQAAYDKAKKEEQ) are compositionally biased toward basic and acidic residues. A disordered region spans residues 244–314 (RRKYDRLRKE…MPGGFPGGMG (71 aa)). The segment covering 289 to 314 (SGGGFPGGMPGGFPGGMPGGFPGGMG) has biased composition (gly residues). The STI1 domain maps to 391-430 (DPELMTAFSDPEVMAALQDVMKNPANLAKHQANPKVAPVI).

Belongs to the FAM10 family.

The chain is FAM10 family protein At4g22670 from Arabidopsis thaliana (Mouse-ear cress).